The sequence spans 325 residues: Intelectin-2 (325 aa).

Residues 1–26 form the signal peptide; sequence MLSMLRTMTRLCFLLFFSVATSGCSA. The Fibrinogen C-terminal domain occupies 44–267; it reads FSFSSLPRSC…AANALCAGIK (224 aa). A disulfide bond links Cys53 and Cys82. The Ca(2+) site is built by His98, Glu99, Asp101, Gly104, Gly109, Asp110, and Asp145. 3 cysteine pairs are disulfide-bonded: Cys106–Cys292, Cys211–Cys271, and Cys263–Cys277. Ca(2+) contacts are provided by Asn272, Glu274, and Asp294. A carbohydrate is bound at residue 274 to 275; the sequence is EH.

As to expression, expressed only in the small intestine.

Its subcellular location is the secreted. In terms of biological role, may play a role in the defense system against pathogens. This is Intelectin-2 (ITLN2) from Homo sapiens (Human).